The chain runs to 937 residues: Calsyntenin-2 (937 aa).

Positions 1–22 are cleaved as a signal peptide; that stretch reads MKMRAITAMLLLVLSGQCGILA. Residues 23 to 818 are Extracellular-facing; the sequence is GKVNKHKPWI…NSDHISGTPP (796 aa). Cadherin domains are found at residues 32–148 and 149–249; these read IETS…SPVF and REPL…KPGW. N-linked (GlcNAc...) asparagine glycosylation occurs at asparagine 86. N-linked (GlcNAc...) asparagine glycans are attached at residues asparagine 330, asparagine 365, and asparagine 716. A helical membrane pass occupies residues 819–839; that stretch reads AATVVIVMCIAALVVIVVLGI. Residues 840–937 lie on the Cytoplasmic side of the membrane; sequence YRIHTTHQDS…LEWDPSTLPY (98 aa). The disordered stretch occupies residues 846–937; sequence HQDSSKEDEE…LEWDPSTLPY (92 aa). Positions 865 to 874 are enriched in polar residues; it reads DNSNLNSIEG. Acidic residues-rich tracts occupy residues 881–900 and 907–917; these read VREEEPEEDEDEDEEDDDLA and ESEDSDEDEET.

This sequence belongs to the calsyntenin family. As to quaternary structure, homooligomer and heterooligomer; mediates both homophilic and heterophilc interactions with clstn1 and clstn3 paralogs via cadherin domains. In terms of tissue distribution, by 48 hours post-fertilization (hpf), widely expressed in the brain, with strong expression in the telencephalon and the midbrain.

It localises to the postsynaptic cell membrane. The protein localises to the endoplasmic reticulum membrane. The protein resides in the golgi apparatus membrane. Its subcellular location is the cell projection. It is found in the dendrite. Its function is as follows. Postsynaptic adhesion molecule. Promotes synapse development by acting as a cell adhesion molecule at the postsynaptic membrane, which associates with presynaptic neurexins. The protein is Calsyntenin-2 (clstn2a) of Danio rerio (Zebrafish).